Reading from the N-terminus, the 938-residue chain is Protein translocase subunit SecA 1 (938 aa).

ATP-binding positions include Q84, 102–106 (GEGKT), and D491. The disordered stretch occupies residues 865-938 (QTGGVATKER…QKTGRHAKRR (74 aa)). Basic and acidic residues predominate over residues 918–927 (TRKERREAAR).

The protein belongs to the SecA family. Monomer and homodimer. Part of the essential Sec protein translocation apparatus which comprises SecA, SecYEG and auxiliary proteins SecDF. Other proteins may also be involved.

Its subcellular location is the cell membrane. The protein localises to the cytoplasm. It carries out the reaction ATP + H2O + cellular proteinSide 1 = ADP + phosphate + cellular proteinSide 2.. In terms of biological role, part of the Sec protein translocase complex. Interacts with the SecYEG preprotein conducting channel. Has a central role in coupling the hydrolysis of ATP to the transfer of proteins into and across the cell membrane, serving as an ATP-driven molecular motor driving the stepwise translocation of polypeptide chains across the membrane. The protein is Protein translocase subunit SecA 1 of Mycolicibacterium vanbaalenii (strain DSM 7251 / JCM 13017 / BCRC 16820 / KCTC 9966 / NRRL B-24157 / PYR-1) (Mycobacterium vanbaalenii).